A 25-amino-acid chain; its full sequence is Caerin-1.2 (25 aa).

Leucine amide is present on L25.

Expressed by the skin parotoid and/or rostral glands.

The protein localises to the secreted. Its function is as follows. Antibacterial peptide, that adopts an alpha helical conformation which can disrupt bacterial membranes. Each caerin displays a different antimicrobial specificity. The protein is Caerin-1.2 of Ranoidea caerulea (Green tree frog).